The following is a 116-amino-acid chain: MRVKGGTVTRARRKKWLKLAKGYWGHKSIGYKVAKQAVVKSWTYAFRDRKQVKRNFRKLWISRINAAVRPLGMSYSQFINGLKKANVKINRKMLSELAIREMKTFEMLVSISKSSK.

This sequence belongs to the bacterial ribosomal protein bL20 family.

In terms of biological role, binds directly to 23S ribosomal RNA and is necessary for the in vitro assembly process of the 50S ribosomal subunit. It is not involved in the protein synthesizing functions of that subunit. The polypeptide is Large ribosomal subunit protein bL20 (Mycoplasmopsis pulmonis (strain UAB CTIP) (Mycoplasma pulmonis)).